The sequence spans 196 residues: uncharacterized protein (196 aa).

Residues 22–42 (MIIIPMALLVFILIIGSFFAI) traverse the membrane as a helical segment.

The protein resides in the cell membrane. This is an uncharacterized protein from Lactobacillus acidophilus (strain ATCC 700396 / NCK56 / N2 / NCFM).